A 285-amino-acid chain; its full sequence is MKYIGAHVSAAGGLANAAIRAAEIDATAFALFTKNQRQWRAAPLTTQTIDEFKAACEKYHYTSAQILPHDSYLINLGHPVTEALEKSRDAFIDEMQRCEQLGLSLLNFHPGSHLMQISEEDCLARIAESINIALDKTHGVTAVIENTAGQGSNLGFKFEHLAAIIDGVEDKSRVGVCIDTCHAFAAGYDLRTSAECEKTFADFARIVGFKYLRGMHLNDAKSTFGSRVDRHHSLGEGNIGHDAFRWIMQDDRFDGIPLILETINPDIWAEEIAWLKAQQTEKAVA.

9 residues coordinate Zn(2+): His-69, His-109, Glu-145, Asp-179, His-182, His-216, Asp-229, His-231, and Glu-261.

Belongs to the AP endonuclease 2 family. Zn(2+) is required as a cofactor.

The catalysed reaction is Endonucleolytic cleavage to 5'-phosphooligonucleotide end-products.. Endonuclease IV plays a role in DNA repair. It cleaves phosphodiester bonds at apurinic or apyrimidinic (AP) sites, generating a 3'-hydroxyl group and a 5'-terminal sugar phosphate. The sequence is that of Probable endonuclease 4 from Escherichia coli (strain SMS-3-5 / SECEC).